The primary structure comprises 856 residues: Dual specificity protein kinase TTK (856 aa).

An N-acetylmethionine modification is found at M1. A Phosphothreonine modification is found at T32. Phosphoserine is present on residues S36, S277, and S342. T380 is subject to Phosphothreonine. S383, S435, and S454 each carry phosphoserine. One can recognise a Protein kinase domain in the interval Y524–V790. ATP contacts are provided by residues I530–V538 and K552. Residue D646 is the Proton acceptor of the active site. S820 carries the post-translational modification Phosphoserine. Residues C837 to K856 form a disordered region.

Belongs to the protein kinase superfamily. Ser/Thr protein kinase family. In terms of assembly, interacts with TPR; the interactions occurs in a microtubule-independent manner. Interacts with MAD1L1 and MAD2L1. In terms of processing, autophosphorylated. In terms of tissue distribution, present in rapidly proliferating cell lines; high levels in testis, bone marrow, spleen and thymus. Low levels in brain, heart, lung and kidney.

The enzyme catalyses L-seryl-[protein] + ATP = O-phospho-L-seryl-[protein] + ADP + H(+). The catalysed reaction is L-threonyl-[protein] + ATP = O-phospho-L-threonyl-[protein] + ADP + H(+). It catalyses the reaction L-tyrosyl-[protein] + ATP = O-phospho-L-tyrosyl-[protein] + ADP + H(+). With respect to regulation, inhibited by the ATP-competitive kinase inhibitor, SP600125. Its function is as follows. Involved in mitotic spindle assembly checkpoint signaling, a process that delays anaphase until chromosomes are bioriented on the spindle, and in the repair of incorrect mitotic kinetochore-spindle microtubule attachments. Phosphorylates MAD1L1 to promote the mitotic spindle assembly checkpoint. Phosphorylates CDCA8/Borealin leading to enhanced AURKB activity at the kinetochore. Phosphorylates SKA3 at 'Ser-34' leading to dissociation of the SKA complex from microtubules and destabilization of microtubule-kinetochore attachments. Phosphorylates KNL1, KNTC1 and autophosphorylates. Phosphorylates MCRS1 which enhances recruitment of KIF2A to the minus end of spindle microtubules and promotes chromosome alignment. The chain is Dual specificity protein kinase TTK (Ttk) from Mus musculus (Mouse).